The primary structure comprises 142 residues: Maximins y/Hw (142 aa).

The signal sequence occupies residues 1 to 18 (MIFKYIVAVSFLIASGYA). Residues 19–43 (RSVKNDEQSLSQREVLEEESLREIR) constitute a propeptide that is removed on maturation. At Phe-68 the chain carries Phenylalanine amide. A propeptide spanning residues 72-121 (TAEDHEVMKRLEAVIRDLDSLDHSEEASERETRGFNQEEIANLFTKKEKR) is cleaved from the precursor. Position 141 is an isoleucine amide (Ile-141).

The protein belongs to the bombinin family. In terms of tissue distribution, expressed by the skin glands.

The protein resides in the secreted. Functionally, maximin-y shows antimicrobial activity against bacteria and against the fungus C.albicans. It has little hemolytic activity. Its function is as follows. Maximin-Hw shows antimicrobial activity against bacteria and against the fungus C.albicans. Shows strong hemolytic activity. This Bombina maxima (Giant fire-bellied toad) protein is Maximins y/Hw.